Consider the following 157-residue polypeptide: Transcriptional repressor NrdR (157 aa).

A zinc finger spans residues 3 to 34 (CPFCGFADTRVIDSRLGKEGNNIRRRRECSQC). The region spanning 49-139 (PLIIKKDARR…VYRQFKDINE (91 aa)) is the ATP-cone domain.

The protein belongs to the NrdR family. Zn(2+) serves as cofactor.

Functionally, negatively regulates transcription of bacterial ribonucleotide reductase nrd genes and operons by binding to NrdR-boxes. This chain is Transcriptional repressor NrdR, found in Syntrophotalea carbinolica (strain DSM 2380 / NBRC 103641 / GraBd1) (Pelobacter carbinolicus).